A 533-amino-acid chain; its full sequence is Retinoid isomerohydrolase (533 aa).

Residue serine 2 is modified to N-acetylserine. Phosphothreonine occurs at positions 101 and 105. A lipid anchor (S-palmitoyl cysteine; in membrane form) is attached at cysteine 112. The residue at position 113 (lysine 113) is an N6-acetyllysine. Serine 117 bears the Phosphoserine mark. Histidine 180 lines the Fe cation pocket. A lipid anchor (S-palmitoyl cysteine; in membrane form) is attached at cysteine 231. 2 residues coordinate Fe cation: histidine 241 and histidine 313. 2 S-palmitoyl cysteine; in membrane form lipidation sites follow: cysteine 329 and cysteine 330. Residue histidine 527 participates in Fe cation binding.

It belongs to the carotenoid oxygenase family. Interacts with MYO7A; this mediates light-dependent intracellular transport of RPE65. It depends on Fe(2+) as a cofactor. In terms of processing, palmitoylation by LRAT regulates ligand binding specificity; the palmitoylated form (membrane form) specifically binds all-trans-retinyl-palmitate, while the soluble unpalmitoylated form binds all-trans-retinol (vitamin A). As to expression, retinal pigment epithelium specific.

It localises to the cytoplasm. Its subcellular location is the cell membrane. The protein resides in the microsome membrane. The enzyme catalyses an all-trans-retinyl ester + H2O = 11-cis-retinol + a fatty acid + H(+). It catalyses the reaction lutein = (3R,3'S)-zeaxanthin. The catalysed reaction is all-trans-retinyl hexadecanoate + H2O = 11-cis-retinol + hexadecanoate + H(+). In terms of biological role, critical isomerohydrolase in the retinoid cycle involved in regeneration of 11-cis-retinal, the chromophore of rod and cone opsins. Catalyzes the cleavage and isomerization of all-trans-retinyl fatty acid esters to 11-cis-retinol which is further oxidized by 11-cis retinol dehydrogenase to 11-cis-retinal for use as visual chromophore. Essential for the production of 11-cis retinal for both rod and cone photoreceptors. Also capable of catalyzing the isomerization of lutein to meso-zeaxanthin an eye-specific carotenoid. The soluble form binds vitamin A (all-trans-retinol), making it available for LRAT processing to all-trans-retinyl ester. The membrane form, palmitoylated by LRAT, binds all-trans-retinyl esters, making them available for IMH (isomerohydrolase) processing to all-cis-retinol. The soluble form is regenerated by transferring its palmitoyl groups onto 11-cis-retinol, a reaction catalyzed by LRAT. The protein is Retinoid isomerohydrolase (RPE65) of Bos taurus (Bovine).